Here is a 306-residue protein sequence, read N- to C-terminus: Serine/threonine-protein phosphatase 2A catalytic subunit A (306 aa).

The Mn(2+) site is built by D54, H56, D82, and N114. The active-site Proton donor is H115. Residues H164 and H238 each contribute to the Mn(2+) site. L306 is modified (leucine methyl ester).

This sequence belongs to the PPP phosphatase family. PP-2A subfamily. PP2A consists of a trimeric holoenzyme, composed of a 37 kDa catalytic subunit (C subunit) and a 65 kDa constant regulatory subunit (A subunit), that associates with a variety of regulatory subunits (B subunit) such as phr2AB (B55) and psrA (B56 homolog). The trimer may partially dissociates into a core 'AC' dimer equally active compared to the trimer. The cofactor is Mn(2+). In terms of processing, reversibly methyl esterified on Leu-306 by leucine carboxyl methyltransferase 1 (LCMT) and protein phosphatase methylesterase 1 (PPME1). Carboxyl methylation influences the affinity of the catalytic subunit for the different regulatory subunits, thereby modulating the PP2A holoenzyme's substrate specificity, enzyme activity and cellular localization.

Its subcellular location is the cytoplasm. It is found in the cytosol. The protein localises to the nucleus speckle. The enzyme catalyses O-phospho-L-seryl-[protein] + H2O = L-seryl-[protein] + phosphate. It catalyses the reaction O-phospho-L-threonyl-[protein] + H2O = L-threonyl-[protein] + phosphate. Functionally, plays a role in activating the myosin contractile function. Dephosphorylates threonine at 'Thr-1823', 'Thr-1833' and 'Thr-2029' in the C-terminal tail region of myosin II heavy chain (mhcA). Drives the assembly of dephosphorylated myosin II filaments to allow myosin recruitment into the cytoskeleton. The sequence is that of Serine/threonine-protein phosphatase 2A catalytic subunit A (pho2a) from Dictyostelium discoideum (Social amoeba).